We begin with the raw amino-acid sequence, 226 residues long: ADP-ribosylation factor-like protein 6-interacting protein 6 (226 aa).

The interval 1–48 is disordered; the sequence is MSFAESGWRSALRRRGPGTPGPVARPSYSSFTQGDSWGEGEVDEEEGC. Phosphoserine occurs at positions 2 and 36. Acidic residues predominate over residues 38–48; that stretch reads GEGEVDEEEGC. Serine 60, serine 65, and serine 80 each carry phosphoserine. Positions 66–85 are disordered; that stretch reads EPRKRSVLPPDGNGSPVLPD. The next 3 helical transmembrane spans lie at 111–131, 150–170, and 205–225; these read ILCS…AYLI, LLGF…CCSF, and MGYS…AWCL.

It belongs to the ARL6IP6 family.

Its subcellular location is the nucleus inner membrane. The polypeptide is ADP-ribosylation factor-like protein 6-interacting protein 6 (ARL6IP6) (Homo sapiens (Human)).